The primary structure comprises 829 residues: Colorectal mutant cancer protein (829 aa).

Disordered stretches follow at residues 114–139 (RSEL…TSVS), 282–320 (TRLQ…SSND), and 672–700 (EEQK…CADA). The segment covering 123-132 (EVNEDSRSMD) has biased composition (basic and acidic residues). A compositionally biased stretch (polar residues) spans 285 to 312 (QSVQATGPSSPGRLTSTNRPINPSTGEL). A compositionally biased stretch (basic and acidic residues) spans 689–698 (SKDKPGKECA). Residues 766–782 (KRANSNLVAAYEKAKKK) carry the Nuclear localization signal motif. The PDZ-binding motif lies at 826 to 829 (ETSL). Ser-828 bears the Phosphoserine mark.

The protein belongs to the MCC family. Interacts with SCRIB (via phosphorylated PDZ-binding motif), EZR, SNX27, NHERF1 and NHERF2. Interacts with CTNNB1; the interaction is enhanced upon Wnt stimulation. Interacts with MYH10. Interacts with CCAR2. In terms of tissue distribution, expressed in a variety of tissues.

The protein localises to the cell membrane. It localises to the cell projection. Its subcellular location is the lamellipodium. The protein resides in the nucleus. It is found in the cytoplasm. Its function is as follows. Candidate for the putative colorectal tumor suppressor gene located at 5q21. Suppresses cell proliferation and the Wnt/b-catenin pathway in colorectal cancer cells. Inhibits DNA binding of b-catenin/TCF/LEF transcription factors. Involved in cell migration independently of RAC1, CDC42 and p21-activated kinase (PAK) activation. Represses the beta-catenin pathway (canonical Wnt signaling pathway) in a CCAR2-dependent manner by sequestering CCAR2 to the cytoplasm, thereby impairing its ability to inhibit SIRT1 which is involved in the deacetylation and negative regulation of beta-catenin (CTNB1) transcriptional activity. The chain is Colorectal mutant cancer protein (MCC) from Homo sapiens (Human).